The sequence spans 361 residues: Peptide chain release factor 1 (361 aa).

At Q237 the chain carries N5-methylglutamine. The segment covering 287 to 297 (KQQKEQSDTRK) has biased composition (basic and acidic residues). Residues 287–313 (KQQKEQSDTRKSLVGSGDRSERIRTYN) form a disordered region.

Belongs to the prokaryotic/mitochondrial release factor family. Methylated by PrmC. Methylation increases the termination efficiency of RF1.

The protein resides in the cytoplasm. Its function is as follows. Peptide chain release factor 1 directs the termination of translation in response to the peptide chain termination codons UAG and UAA. In Francisella tularensis subsp. novicida (strain U112), this protein is Peptide chain release factor 1.